A 250-amino-acid chain; its full sequence is Non-specific acid phosphatase (250 aa).

The N-terminal stretch at 1–20 (MKSRYLLFFLPLIVAKYTSA) is a signal peptide.

The protein belongs to the class A bacterial acid phosphatase family. Homodimer.

The protein resides in the periplasm. It catalyses the reaction a phosphate monoester + H2O = an alcohol + phosphate. In Salmonella typhi, this protein is Non-specific acid phosphatase (phoN).